A 482-amino-acid polypeptide reads, in one-letter code: Putative metabolite transport protein YfiG (482 aa).

Residues 1–29 (MSTKKKEAVIGKESLAHKGLLRTITLVST) are Cytoplasmic-facing. The helical transmembrane segment at 30–50 (FGGLLFGYDTGVINGALPFMA) threads the bilayer. Topologically, residues 51-59 (TAGQLNLTP) are extracellular. The chain crosses the membrane as a helical span at residues 60-80 (VTEGLVASSLLLGAAFGAMFG). At 81–92 (GRLSDRHGRRKT) the chain is on the cytoplasmic side. Residues 93 to 113 (ILYLALLFIAATLGCTFSPNA) form a helical membrane-spanning segment. Residues 114-120 (SVMIAFR) lie on the Extracellular side of the membrane. A helical transmembrane segment spans residues 121–141 (FLLGLAVGCASVTVPTFLAEI). At 142-155 (SPAERRGRIVTQNE) the chain is on the cytoplasmic side. Residues 156–176 (LMIVIGQLLAYTFNAIIGSTM) form a helical membrane-spanning segment. Topologically, residues 177 to 184 (GESANVWR) are extracellular. A helical membrane pass occupies residues 185–205 (YMLVIATLPAVVLWFGMLIVP). Over 206-263 (ESPRWLAAKGRMGDALRVLRQIREDSQAQQEIKEIKHAIEGTAKKAGFHDFQEPWIRR) the chain is Cytoplasmic. Residues 264–284 (ILFIGIGIAIVQQITGVNSIM) form a helical membrane-spanning segment. Residues 285 to 301 (YYGTEILREAGFQTEAA) are Extracellular-facing. A helical membrane pass occupies residues 302-322 (LIGNIANGVISVIAVIFGIWL). Over 323–331 (LGKVRRRPM) the chain is Cytoplasmic. The next 2 helical transmembrane spans lie at 332 to 352 (LIIG…LSIV) and 353 to 373 (LEGT…FLAF). Residues 374-400 (QQTAISTVTWLMLSEIFPMHVRGLGMG) lie on the Cytoplasmic side of the membrane. A helical transmembrane segment spans residues 401-421 (ISTFCLWTANFLIGFTFPILL). Residues 422–423 (NH) lie on the Extracellular side of the membrane. A helical membrane pass occupies residues 424-444 (IGMSATFFIFVAMNILAILFV). The Cytoplasmic portion of the chain corresponds to 445-482 (KKYVPETKGRSLEQLEHSFRQYGRRADQEIQNQTTHLS).

Belongs to the major facilitator superfamily. Sugar transporter (TC 2.A.1.1) family.

Its subcellular location is the cell membrane. This Bacillus subtilis (strain 168) protein is Putative metabolite transport protein YfiG (yfiG).